The chain runs to 105 residues: Putative pterin-4-alpha-carbinolamine dehydratase (105 aa).

The protein belongs to the pterin-4-alpha-carbinolamine dehydratase family.

The enzyme catalyses (4aS,6R)-4a-hydroxy-L-erythro-5,6,7,8-tetrahydrobiopterin = (6R)-L-erythro-6,7-dihydrobiopterin + H2O. The chain is Putative pterin-4-alpha-carbinolamine dehydratase from Sinorhizobium fredii (strain NBRC 101917 / NGR234).